The sequence spans 150 residues: Lymphocyte antigen 6 complex locus protein G5c (150 aa).

An N-terminal signal peptide occupies residues 1 to 41 (MRFMAGPAGSQSLGPLCFHSSPQALYTVLLIVLVMMSLVFG). A UPAR/Ly6 domain is found at 60 to 150 (LRCYRCLLET…DPQNRGLYTP (91 aa)). Disulfide bonds link Cys-62–Cys-89, Cys-65–Cys-74, Cys-81–Cys-107, and Cys-134–Cys-139. Residue Asn-96 is glycosylated (N-linked (GlcNAc...) asparagine).

Forms oligomers. In terms of processing, N-glycosylated. Detected in T-cell lines and fetal and adult lung.

It is found in the secreted. Functionally, may have a role in hematopoietic cell differentiation. In Homo sapiens (Human), this protein is Lymphocyte antigen 6 complex locus protein G5c (LY6G5C).